We begin with the raw amino-acid sequence, 534 residues long: GMP synthase [glutamine-hydrolyzing] (534 aa).

The Glutamine amidotransferase type-1 domain maps to 20-210 (PVLVIDFGAQ…LLVGAGCRPS (191 aa)). Cys97 functions as the Nucleophile in the catalytic mechanism. Catalysis depends on residues His184 and Glu186. Residues 211-408 (WTMINIVEEA…LGLPEDIVWR (198 aa)) form the GMPS ATP-PPase domain. 238–244 (SGGVDSA) is a binding site for ATP.

As to quaternary structure, homodimer.

It catalyses the reaction XMP + L-glutamine + ATP + H2O = GMP + L-glutamate + AMP + diphosphate + 2 H(+). The protein operates within purine metabolism; GMP biosynthesis; GMP from XMP (L-Gln route): step 1/1. In terms of biological role, catalyzes the synthesis of GMP from XMP. The polypeptide is GMP synthase [glutamine-hydrolyzing] (Parafrankia sp. (strain EAN1pec)).